The primary structure comprises 216 residues: Probable GTP-binding protein EngB (216 aa).

Residues 27-201 (GGVEIAFAGR…AQTLTGWYLA (175 aa)) enclose the EngB-type G domain. Residues 35–42 (GRSNAGKS), 62–66 (GRTQL), 80–83 (DLPG), 147–150 (TKAD), and 180–182 (FSS) each bind GTP. Mg(2+) is bound by residues Ser-42 and Thr-64.

It belongs to the TRAFAC class TrmE-Era-EngA-EngB-Septin-like GTPase superfamily. EngB GTPase family. Mg(2+) is required as a cofactor.

Its function is as follows. Necessary for normal cell division and for the maintenance of normal septation. This Aeromonas hydrophila subsp. hydrophila (strain ATCC 7966 / DSM 30187 / BCRC 13018 / CCUG 14551 / JCM 1027 / KCTC 2358 / NCIMB 9240 / NCTC 8049) protein is Probable GTP-binding protein EngB.